The chain runs to 238 residues: 3-deoxy-manno-octulosonate cytidylyltransferase (238 aa).

Belongs to the KdsB family.

It is found in the cytoplasm. The enzyme catalyses 3-deoxy-alpha-D-manno-oct-2-ulosonate + CTP = CMP-3-deoxy-beta-D-manno-octulosonate + diphosphate. Its pathway is nucleotide-sugar biosynthesis; CMP-3-deoxy-D-manno-octulosonate biosynthesis; CMP-3-deoxy-D-manno-octulosonate from 3-deoxy-D-manno-octulosonate and CTP: step 1/1. The protein operates within bacterial outer membrane biogenesis; lipopolysaccharide biosynthesis. Activates KDO (a required 8-carbon sugar) for incorporation into bacterial lipopolysaccharide in Gram-negative bacteria. This is 3-deoxy-manno-octulosonate cytidylyltransferase from Nitratiruptor sp. (strain SB155-2).